A 254-amino-acid polypeptide reads, in one-letter code: Probable protein S-acyltransferase 15 (254 aa).

The next 2 membrane-spanning stretches (helical) occupy residues 1-21 (MGFV…GLQS) and 28-48 (ALLF…CVLV). The DHHC domain occupies 75-125 (RKCDKCFAYKPLRTHHCRVCRRCVLKMDHHCLWINNCVGYANYKAFFILVF). C105 (S-palmitoyl cysteine intermediate) is an active-site residue. A run of 2 helical transmembrane segments spans residues 119-139 (AFFI…VLLV) and 164-184 (IFMI…IYLI).

This sequence belongs to the DHHC palmitoyltransferase family.

Its subcellular location is the endoplasmic reticulum membrane. It localises to the cytoplasmic vesicle membrane. It catalyses the reaction L-cysteinyl-[protein] + hexadecanoyl-CoA = S-hexadecanoyl-L-cysteinyl-[protein] + CoA. Its function is as follows. Palmitoyl acyltransferase. The protein is Probable protein S-acyltransferase 15 (PAT15) of Arabidopsis thaliana (Mouse-ear cress).